A 548-amino-acid polypeptide reads, in one-letter code: MKGIKSKMLSRGKSQDTQKSSKKKESKKSNSHDSSKAPKESPSTDPNGSVIGAQNDFLTVPKHSGKKVPIDTTPTPRDEILLENVRTVRKQRSSLYHISENRNLVRLPSFTDVPVNKWHSLALEKLEQCCVVFDFNDPSTDLYGKEVKREALQDLIDLISVRKEAIDESLYPSIVHMFAVNVFRPLPPPSNPPGEIMDLEEDEPALEVAWPHLHLVYDFFLRFFESPSLNTSVAKVYINQKFIRKLLVLFDSEDPRERDFLKTTLHRIYGKFLSLRAFIRRSINNLFLQFVYENEQFNGIAELLEILGSIINGFALPLKEEHKIFLSRVLIPLHKAKSLPLYYPQIAYGIVQFVEKDSSVTEEVVLGLLRYWPKVNSSKEVLFLNEIEDIIEVMEPSEFLKIQVPLFHKLATSISSQNFQVAERALYFFNNDYFVHLVEENVDIILPIIYPALFEISKSHWNRVIHSMVCNVLKLFMDINPSLFDEVDAEYSESRRKKEDEEIIREERWTILENIAKENAMKLKSQNPTTVHSTTERLKKLSLDYTNG.

Residues Met-1–Ser-10 show a composition bias toward basic residues. Residues Met-1–Thr-75 are disordered. Over residues Lys-27 to Lys-39 the composition is skewed to basic and acidic residues. Residue Tyr-96 is modified to Phosphotyrosine. Ser-99, Ser-109, and Ser-542 each carry phosphoserine.

It belongs to the phosphatase 2A regulatory subunit B family. PP2A consists of a common heterodimeric core enzyme, composed of a 36 kDa catalytic subunit (subunit C) and a 65 kDa constant regulatory subunit (PR65 or subunit A), that associates with a variety of regulatory subunits. Proteins that associate with the core dimer include three families of regulatory subunits B (the R2/B/PR55/B55, R3/B''/PR72/PR130/PR59 and R5/B'/B56 families), the 48 kDa variable regulatory subunit, viral proteins, and cell signaling molecules.

Its subcellular location is the cytoplasm. It is found in the nucleus. Its function is as follows. The B regulatory subunit might modulate substrate selectivity and catalytic activity, and might also direct the localization of the catalytic enzyme to a particular subcellular compartment. Has a role in cell shape control and septum formation. The chain is Serine/threonine-protein phosphatase 2A 56 kDa regulatory subunit delta 1 isoform (par1) from Schizosaccharomyces pombe (strain 972 / ATCC 24843) (Fission yeast).